The sequence spans 270 residues: Large ribosomal subunit protein uL2c (270 aa).

The disordered stretch occupies residues 221-245; it reads NPIDHPHGGGEGRAPIGRNQPKTPW.

This sequence belongs to the universal ribosomal protein uL2 family. Part of the 50S ribosomal subunit.

The protein resides in the plastid. The protein is Large ribosomal subunit protein uL2c (rpl2) of Cuscuta gronovii (Common dodder).